A 1093-amino-acid polypeptide reads, in one-letter code: Mediator of RNA polymerase II transcription subunit 14 (1093 aa).

Disordered regions lie at residues 1–62 (MPGV…IDGH) and 1034–1065 (ETKS…ANDT). The segment covering 19–31 (DTQTPSNGDNLRN) has biased composition (polar residues). Residues 41-62 (KGDKDHDPDKESYAGKPRIDGH) show a composition bias toward basic and acidic residues. A compositionally biased stretch (polar residues) spans 1040–1056 (DYSTQPAPENQSQTGAP).

It belongs to the Mediator complex subunit 14 family. Component of the Mediator complex.

The protein resides in the nucleus. Its function is as follows. Component of the Mediator complex, a coactivator involved in the regulated transcription of nearly all RNA polymerase II-dependent genes. Mediator functions as a bridge to convey information from gene-specific regulatory proteins to the basal RNA polymerase II transcription machinery. Mediator is recruited to promoters by direct interactions with regulatory proteins and serves as a scaffold for the assembly of a functional preinitiation complex with RNA polymerase II and the general transcription factors. This chain is Mediator of RNA polymerase II transcription subunit 14 (rgr1), found in Aspergillus fumigatus (strain ATCC MYA-4609 / CBS 101355 / FGSC A1100 / Af293) (Neosartorya fumigata).